Consider the following 287-residue polypeptide: uncharacterized protein (287 aa).

This sequence belongs to the AllH family.

This is an uncharacterized protein from Escherichia coli (strain K12).